Reading from the N-terminus, the 426-residue chain is MLDPALLRHQPADLAERLRTSRGFELDVSALESLEADRKRIQVRTQELQSLRNSRSKAIGQAKAKGEDVSAIMAEVAAFADELKASEVALDELREKIDAISMGIPNLPADDVPAGADENDNVEQARWGTARQFDFKVLDHVELGARNGWLDGETAAKLSGSRFTVLRGPIARLHRALAQFMVDLHTGEHGYEETNVPLLVNADSLRGTSQLPKFEDDLFKTAVGDSTRYLIPTSEVPLTNIVRDEIVDAERLPLRMTAHSMCFRAEAGSGGRDVRGMIRQHQFEKVELVSISRPEDSDAEHQRMTRCAEVVLEKLGLPYRKVLLCTGDMGFSAVKTYDLEVWLPSQETYREISSCSNCGDFQARRMQARWRNPATGKPELAHTLNGSGVAVGRAMIAVMENYQNADGSITVPEALRPYMGGLETIG.

233–235 (TSE) contacts L-serine. 264-266 (RAE) contributes to the ATP binding site. Residue glutamate 287 participates in L-serine binding. Residue 351–354 (EISS) coordinates ATP. L-serine is bound at residue serine 387.

It belongs to the class-II aminoacyl-tRNA synthetase family. Type-1 seryl-tRNA synthetase subfamily. Homodimer. The tRNA molecule binds across the dimer.

It localises to the cytoplasm. It catalyses the reaction tRNA(Ser) + L-serine + ATP = L-seryl-tRNA(Ser) + AMP + diphosphate + H(+). The enzyme catalyses tRNA(Sec) + L-serine + ATP = L-seryl-tRNA(Sec) + AMP + diphosphate + H(+). Its pathway is aminoacyl-tRNA biosynthesis; selenocysteinyl-tRNA(Sec) biosynthesis; L-seryl-tRNA(Sec) from L-serine and tRNA(Sec): step 1/1. In terms of biological role, catalyzes the attachment of serine to tRNA(Ser). Is also able to aminoacylate tRNA(Sec) with serine, to form the misacylated tRNA L-seryl-tRNA(Sec), which will be further converted into selenocysteinyl-tRNA(Sec). This chain is Serine--tRNA ligase, found in Stenotrophomonas maltophilia (strain R551-3).